The sequence spans 221 residues: Pyridoxal phosphate homeostasis protein (221 aa).

Lysine 26 is modified (N6-(pyridoxal phosphate)lysine).

This sequence belongs to the pyridoxal phosphate-binding protein YggS/PROSC family.

Functionally, pyridoxal 5'-phosphate (PLP)-binding protein, which is involved in PLP homeostasis. The sequence is that of Pyridoxal phosphate homeostasis protein from Corynebacterium glutamicum (strain ATCC 13032 / DSM 20300 / JCM 1318 / BCRC 11384 / CCUG 27702 / LMG 3730 / NBRC 12168 / NCIMB 10025 / NRRL B-2784 / 534).